A 152-amino-acid polypeptide reads, in one-letter code: Superoxide dismutase [Cu-Zn] 2 (152 aa).

3 residues coordinate Cu cation: H45, H47, and H62. Positions 53-81 are disordered; that stretch reads TNGSMSTGPHFNPDGKQHGAPEDANRHAG. Zn(2+) is bound by residues H62, H70, H79, and D82. A compositionally biased stretch (basic and acidic residues) spans 65–81; sequence PDGKQHGAPEDANRHAG. H119 provides a ligand contact to Cu cation.

It belongs to the Cu-Zn superoxide dismutase family. As to quaternary structure, homodimer. It depends on Cu cation as a cofactor. Zn(2+) serves as cofactor.

It localises to the cytoplasm. The enzyme catalyses 2 superoxide + 2 H(+) = H2O2 + O2. Destroys radicals which are normally produced within the cells and which are toxic to biological systems. The sequence is that of Superoxide dismutase [Cu-Zn] 2 (SODCC2) from Brassica juncea (Indian mustard).